We begin with the raw amino-acid sequence, 545 residues long: Membrane protein insertase YidC (545 aa).

4 helical membrane passes run I350–Y370, L424–V444, A461–L481, and P498–V518.

This sequence belongs to the OXA1/ALB3/YidC family. Type 1 subfamily. As to quaternary structure, interacts with the Sec translocase complex via SecD. Specifically interacts with transmembrane segments of nascent integral membrane proteins during membrane integration.

It localises to the cell inner membrane. Its function is as follows. Required for the insertion and/or proper folding and/or complex formation of integral membrane proteins into the membrane. Involved in integration of membrane proteins that insert both dependently and independently of the Sec translocase complex, as well as at least some lipoproteins. Aids folding of multispanning membrane proteins. The polypeptide is Membrane protein insertase YidC (Neisseria gonorrhoeae (strain NCCP11945)).